Here is a 208-residue protein sequence, read N- to C-terminus: MTKVLFVKANNRPAEQAVSVKLYEAFLASYKEAHPNDTVVELDLYKEELPYVGVDMINGTFKAGKGFDLTEEEAKAVAVADKYLNQFLEADKVVFGFPLWNLTIPAVLHTYIDYLNRAGKTFKYTPEGPVGLIGDKKIALLNARGGVYSEGPAAGAEMAVKYVATMMGFFGATNMETIVIEGHNQFPDKAEEIITAGLEEAAKVANKF.

Belongs to the azoreductase type 1 family. In terms of assembly, homodimer. It depends on FMN as a cofactor.

It catalyses the reaction 2 a quinone + NADH + H(+) = 2 a 1,4-benzosemiquinone + NAD(+). The catalysed reaction is N,N-dimethyl-1,4-phenylenediamine + anthranilate + 2 NAD(+) = 2-(4-dimethylaminophenyl)diazenylbenzoate + 2 NADH + 2 H(+). Functionally, quinone reductase that provides resistance to thiol-specific stress caused by electrophilic quinones. Also exhibits azoreductase activity. Catalyzes the reductive cleavage of the azo bond in aromatic azo compounds to the corresponding amines. In Bacillus cereus (strain ZK / E33L), this protein is FMN-dependent NADH:quinone oxidoreductase 4.